The following is a 156-amino-acid chain: Small ribosomal subunit protein uS7 (156 aa).

The protein belongs to the universal ribosomal protein uS7 family. In terms of assembly, part of the 30S ribosomal subunit. Contacts proteins S9 and S11.

Its function is as follows. One of the primary rRNA binding proteins, it binds directly to 16S rRNA where it nucleates assembly of the head domain of the 30S subunit. Is located at the subunit interface close to the decoding center, probably blocks exit of the E-site tRNA. The polypeptide is Small ribosomal subunit protein uS7 (Oleidesulfovibrio alaskensis (strain ATCC BAA-1058 / DSM 17464 / G20) (Desulfovibrio alaskensis)).